Reading from the N-terminus, the 311-residue chain is tRNA dimethylallyltransferase (311 aa).

8 to 15 contacts ATP; that stretch reads GPTGVGKS. 10–15 contacts substrate; it reads TGVGKS.

It belongs to the IPP transferase family. As to quaternary structure, monomer. Mg(2+) serves as cofactor.

It catalyses the reaction adenosine(37) in tRNA + dimethylallyl diphosphate = N(6)-dimethylallyladenosine(37) in tRNA + diphosphate. Its function is as follows. Catalyzes the transfer of a dimethylallyl group onto the adenine at position 37 in tRNAs that read codons beginning with uridine, leading to the formation of N6-(dimethylallyl)adenosine (i(6)A). The sequence is that of tRNA dimethylallyltransferase from Mycobacterium leprae (strain Br4923).